The following is a 127-amino-acid chain: MSQGLPAAGSVLQRSVAAPGNQPQPQPQQQSPEDDDRKVRRREKNRVAAQRSRKKQTQKADKLHEEYESLEQENTMLRREIGKLTEELKHLTEALKEHEKMCPLLLCPMNFVPVPPRPDPVAGCLPR.

The tract at residues 1 to 72 (MSQGLPAAGS…LHEEYESLEQ (72 aa)) is disordered. Residues S2 and S31 each carry the phosphoserine modification. A bZIP domain is found at 35–98 (DDRKVRRREK…KHLTEALKEH (64 aa)). The basic motif stretch occupies residues 37–62 (RKVRRREKNRVAAQRSRKKQTQKADK). The span at 58–67 (QKADKLHEEY) shows a compositional bias: basic and acidic residues. The segment at 63-91 (LHEEYESLEQENTMLRREIGKLTEELKHL) is leucine-zipper.

It belongs to the bZIP family. In terms of assembly, heterodimer; heterodimerizes with JUN family proteins. Interacts with JUN.

It is found in the nucleus. Its function is as follows. AP-1 family transcription factor that controls the differentiation of CD8(+) thymic conventional dendritic cells in the immune system. Required for development of CD8-alpha(+) classical dendritic cells (cDCs) and related CD103(+) dendritic cells that cross-present antigens to CD8 T-cells and produce interleukin-12 (IL12) in response to pathogens. Acts via the formation of a heterodimer with JUN family proteins that recognizes and binds DNA sequence 5'-TGA[CG]TCA-3' and regulates expression of target genes. The sequence is that of Basic leucine zipper transcriptional factor ATF-like 3 (BATF3) from Homo sapiens (Human).